The following is a 306-amino-acid chain: Cilia- and flagella-associated protein 73 (306 aa).

Coiled coils occupy residues 49 to 139 (LQAQ…QRLE) and 197 to 231 (QSEK…WESK).

It belongs to the CFAP73 family.

The protein localises to the cytoplasm. Its subcellular location is the cytoskeleton. It is found in the cilium axoneme. In terms of biological role, may play a role in ciliary/flagellar motility by regulating the assembly and the activity of axonemal inner dynein arm. This is Cilia- and flagella-associated protein 73 from Mus musculus (Mouse).